The sequence spans 248 residues: Small ribosomal subunit protein uS3 (248 aa).

In terms of domain architecture, KH type-2 spans 39 to 107 (IRQMLLKQLK…EVFINIVEIR (69 aa)). Residues 214-248 (AVDKRMTAESEGPSSGRPPRRDRDRDRDRDRDSAA) are disordered. Residues 232–248 (PRRDRDRDRDRDRDSAA) are compositionally biased toward basic and acidic residues.

The protein belongs to the universal ribosomal protein uS3 family. As to quaternary structure, part of the 30S ribosomal subunit. Forms a tight complex with proteins S10 and S14.

In terms of biological role, binds the lower part of the 30S subunit head. Binds mRNA in the 70S ribosome, positioning it for translation. In Azorhizobium caulinodans (strain ATCC 43989 / DSM 5975 / JCM 20966 / LMG 6465 / NBRC 14845 / NCIMB 13405 / ORS 571), this protein is Small ribosomal subunit protein uS3.